Here is an 805-residue protein sequence, read N- to C-terminus: Mediator of RNA polymerase II transcription subunit 25 (805 aa).

2 disordered regions span residues 308 to 332 and 647 to 691; these read NQMP…PQNT and QQPQ…NPQL. Over residues 647 to 678 the composition is skewed to low complexity; sequence QQPQQAASQAPPQATQTTVQAPGQPQNPQPGA. The short motif at 691 to 695 is the LXXLL motif element; it reads LRNLL.

The protein belongs to the Mediator complex subunit 25 family. In terms of assembly, component of the Mediator complex.

It is found in the nucleus. In terms of biological role, component of the Mediator complex, a coactivator involved in the regulated transcription of nearly all RNA polymerase II-dependent genes. Mediator functions as a bridge to convey information from gene-specific regulatory proteins to the basal RNA polymerase II transcription machinery. Mediator is recruited to promoters by direct interactions with regulatory proteins and serves as a scaffold for the assembly of a functional preinitiation complex with RNA polymerase II and the general transcription factors. The polypeptide is Mediator of RNA polymerase II transcription subunit 25 (med25) (Xenopus tropicalis (Western clawed frog)).